The sequence spans 219 residues: 3,4-dihydroxy-2-butanone 4-phosphate synthase (219 aa).

Residues Arg-37–Glu-38, Asp-42, Arg-150–Thr-154, and Glu-174 each bind D-ribulose 5-phosphate. Residue Glu-38 participates in Mg(2+) binding. His-153 serves as a coordination point for Mg(2+).

The protein belongs to the DHBP synthase family. Homodimer. Mg(2+) serves as cofactor. Mn(2+) is required as a cofactor.

It catalyses the reaction D-ribulose 5-phosphate = (2S)-2-hydroxy-3-oxobutyl phosphate + formate + H(+). The protein operates within cofactor biosynthesis; riboflavin biosynthesis; 2-hydroxy-3-oxobutyl phosphate from D-ribulose 5-phosphate: step 1/1. Functionally, catalyzes the conversion of D-ribulose 5-phosphate to formate and 3,4-dihydroxy-2-butanone 4-phosphate. This Oleidesulfovibrio alaskensis (strain ATCC BAA-1058 / DSM 17464 / G20) (Desulfovibrio alaskensis) protein is 3,4-dihydroxy-2-butanone 4-phosphate synthase.